Consider the following 561-residue polypeptide: Putative transport protein YbjL (561 aa).

5 helical membrane-spanning segments follow: residues 8–28, 32–52, 66–86, 94–114, and 158–178; these read LLNG…LCLG, LGSV…LLGQ, FMLF…SIFF, MLAL…GKLF, and NLSL…IVGA. RCK C-terminal domains lie at 200–288 and 292–373; these read RGLD…SFRN and VFDR…RIGF. Transmembrane regions (helical) follow at residues 383 to 403, 406 to 426, 447 to 467, 475 to 495, and 540 to 560; these read LLAF…TFQF, FSFG…LGFL, FGLM…ISNG, MLIA…LFGA, and AIAN…WPGL.

It belongs to the AAE transporter (TC 2.A.81) family. YbjL subfamily.

The protein localises to the cell membrane. The chain is Putative transport protein YbjL from Salmonella agona (strain SL483).